The sequence spans 510 residues: Zinc finger and SCAN domain-containing protein 18 (510 aa).

The disordered stretch occupies residues 1–40 (MLPLEKAFASPRSSPAPPDLPTPGSAAGVQQEEPETIPER). The SCAN box domain occupies 49 to 131 (RLRFREFVYQ…SLVEGLADVL (83 aa)). 4 disordered regions span residues 172–191 (ALGA…SPDP), 201–231 (EAKT…EWGH), 263–413 (TEEL…GKPY), and 461–510 (KTHE…EAQR). Basic and acidic residues-rich tracts occupy residues 214–231 (QKLK…EWGH) and 263–273 (TEELRLVERDP). The segment covering 288–299 (AGCACEEAAPAG) has biased composition (low complexity). The segment covering 344 to 356 (DSATGSQRQSVIQ) has biased composition (polar residues). 2 consecutive C2H2-type zinc fingers follow at residues 413–435 (YACG…HSSH) and 441–463 (YACQ…QKTH). Residues 491 to 501 (GGPPESVEGEA) are compositionally biased toward low complexity.

Belongs to the krueppel C2H2-type zinc-finger protein family.

The protein resides in the nucleus. Its function is as follows. May be involved in transcriptional regulation. The sequence is that of Zinc finger and SCAN domain-containing protein 18 (ZSCAN18) from Homo sapiens (Human).